A 156-amino-acid polypeptide reads, in one-letter code: Succinate dehydrogenase assembly factor 2-B, mitochondrial (156 aa).

Residues 1–12 (MLRQILSSAVAK) constitute a mitochondrion transit peptide.

The protein belongs to the SDHAF2 family. Interacts with the flavoprotein subunit within the SDH catalytic dimer.

The protein resides in the mitochondrion matrix. In terms of biological role, plays an essential role in the assembly of succinate dehydrogenase (SDH), an enzyme complex (also referred to as respiratory complex II) that is a component of both the tricarboxylic acid (TCA) cycle and the mitochondrial electron transport chain, and which couples the oxidation of succinate to fumarate with the reduction of ubiquinone (coenzyme Q) to ubiquinol. Required for flavinylation (covalent attachment of FAD) of the flavoprotein subunit of the SDH catalytic dimer. In Drosophila willistoni (Fruit fly), this protein is Succinate dehydrogenase assembly factor 2-B, mitochondrial.